The primary structure comprises 375 residues: N-acetylneuraminate epimerase (375 aa).

A signal peptide spans 1-22; it reads MKLTKTALCTALFATFTFSANA. Kelch repeat units lie at residues 43-87, 89-140, 142-176, 177-222, 225-273, 295-344, and 346-375; these read TVYV…AAVD, KLYV…ASHG, KVYILGGSNLSIFNGFFQDNVAAGEDKGKKDEIVA, AYFD…TIQG, LVVV…LAGA, KQFK…SYNN, and VLLIGGETDGGKALTSVKAISYDGKKLTVE. E231 serves as the catalytic Proton acceptor.

It belongs to the NanM family. In terms of assembly, homodimer.

It localises to the periplasm. It catalyses the reaction N-acetyl-alpha-neuraminate = N-acetyl-beta-neuraminate. In terms of biological role, converts alpha-N-acetylneuranimic acid (Neu5Ac) to the beta-anomer, accelerating the equilibrium between the alpha- and beta-anomers. Probably facilitates sialidase-negative bacteria to compete successfully for limited amounts of extracellular Neu5Ac, which is likely taken up in the beta-anomer. In addition, the rapid removal of sialic acid from solution might be advantageous to the bacterium to damp down host responses. The chain is N-acetylneuraminate epimerase from Haemophilus influenzae (strain 86-028NP).